A 152-amino-acid chain; its full sequence is Large-conductance mechanosensitive channel (152 aa).

3 helical membrane passes run 21-41, 44-64, and 92-112; these read IDLA…DSLV, VVMP…NKFL, and GNFI…FWMV.

Belongs to the MscL family. In terms of assembly, homopentamer.

It is found in the cell inner membrane. Functionally, channel that opens in response to stretch forces in the membrane lipid bilayer. May participate in the regulation of osmotic pressure changes within the cell. The polypeptide is Large-conductance mechanosensitive channel (Bordetella pertussis (strain Tohama I / ATCC BAA-589 / NCTC 13251)).